Reading from the N-terminus, the 98-residue chain is Prostate and testis expressed protein 3 (98 aa).

A signal peptide spans 1 to 20 (MNKHFLFLFLLYCLIVAVTS). A UPAR/Ly6 domain is found at 21–97 (LQCITCHLRT…CCNYNYCNFK (77 aa)). Cystine bridges form between C23-C50, C26-C35, C42-C68, and C72-C88.

Belongs to the PATE family. In terms of tissue distribution, specifically expressed in prostate and testis.

It localises to the secreted. This is Prostate and testis expressed protein 3 (PATE3) from Homo sapiens (Human).